Reading from the N-terminus, the 177-residue chain is UPF0200 protein STK_09500 (177 aa).

11–18 provides a ligand contact to ATP; sequence GMPGSGKG.

It belongs to the UPF0200 family.

In Sulfurisphaera tokodaii (strain DSM 16993 / JCM 10545 / NBRC 100140 / 7) (Sulfolobus tokodaii), this protein is UPF0200 protein STK_09500.